The primary structure comprises 103 residues: Potassium voltage-gated channel subfamily E member 3 (103 aa).

N-linked (GlcNAc...) asparagine glycans are attached at residues N5, N22, and N41. Residues 30–52 (LCRPGPGPGPDNQTEDRRASLPG) are disordered. A helical membrane pass occupies residues 57–77 (SYMYILFVMFLFAVTVGSLIL). The tract at residues 68-79 (FAVTVGSLILGY) is interaction with KCNQ1. The Cytoplasmic portion of the chain corresponds to 78-103 (GYTRSRKVDKRSDPYHVYIKNRVSMI).

It belongs to the potassium channel KCNE family. As to quaternary structure, interacts with KCNB1. Interacts with KCNC2. Associates with KCNC4/Kv3.4. Interacts with KCNQ1; associates with a KCNQ1:KCNE3 stoichiometry of 4:4; produces a current with nearly instantaneous activation with a linear current-voltage relationship and alters membrane raft localization; affects KCNQ1 structure and gating properties.

It is found in the cell membrane. It localises to the cytoplasm. Its subcellular location is the perikaryon. The protein localises to the cell projection. The protein resides in the dendrite. It is found in the membrane raft. Ancillary protein that functions as a regulatory subunit of the voltage-gated potassium (Kv) channel complex composed of pore-forming and potassium-conducting alpha subunits and of regulatory beta subunits. KCNE3 beta subunit modulates the gating kinetics and enhances stability of the channel complex. Alters the gating of the delayed rectifier Kv channel containing KCNB1 alpha subunit. Associates with KCNC4/Kv3.4 alpha subunit to form the subthreshold Kv channel in skeletal muscle and to establish the resting membrane potential (RMP) in muscle cells. Association with KCNQ1/KCLQT1 alpha subunit may form the intestinal cAMP-stimulated potassium channel involved in chloride secretion that produces a current with nearly instantaneous activation with a linear current-voltage relationship. In Mus musculus (Mouse), this protein is Potassium voltage-gated channel subfamily E member 3.